The sequence spans 264 residues: S-adenosylmethionine decarboxylase proenzyme (264 aa).

Catalysis depends on Ser-112, which acts as the Schiff-base intermediate with substrate; via pyruvic acid. Ser-112 bears the Pyruvic acid (Ser); by autocatalysis mark. The Proton acceptor; for processing activity role is filled by His-117. The active-site Proton donor; for catalytic activity is the Cys-140.

Belongs to the prokaryotic AdoMetDC family. Type 2 subfamily. Heterooctamer of four alpha and four beta chains arranged as a tetramer of alpha/beta heterodimers. It depends on pyruvate as a cofactor. In terms of processing, is synthesized initially as an inactive proenzyme. Formation of the active enzyme involves a self-maturation process in which the active site pyruvoyl group is generated from an internal serine residue via an autocatalytic post-translational modification. Two non-identical subunits are generated from the proenzyme in this reaction, and the pyruvate is formed at the N-terminus of the alpha chain, which is derived from the carboxyl end of the proenzyme. The post-translation cleavage follows an unusual pathway, termed non-hydrolytic serinolysis, in which the side chain hydroxyl group of the serine supplies its oxygen atom to form the C-terminus of the beta chain, while the remainder of the serine residue undergoes an oxidative deamination to produce ammonia and the pyruvoyl group blocking the N-terminus of the alpha chain.

It catalyses the reaction S-adenosyl-L-methionine + H(+) = S-adenosyl 3-(methylsulfanyl)propylamine + CO2. Its pathway is amine and polyamine biosynthesis; S-adenosylmethioninamine biosynthesis; S-adenosylmethioninamine from S-adenosyl-L-methionine: step 1/1. In terms of biological role, catalyzes the decarboxylation of S-adenosylmethionine to S-adenosylmethioninamine (dcAdoMet), the propylamine donor required for the synthesis of the polyamines spermine and spermidine from the diamine putrescine. The polypeptide is S-adenosylmethionine decarboxylase proenzyme (Cronobacter sakazakii (strain ATCC BAA-894) (Enterobacter sakazakii)).